The following is a 242-amino-acid chain: 7-cyano-7-deazaguanine synthase (242 aa).

Positions 1 to 25 are disordered; that stretch reads MNSRKDKNSKGKNSDTKRKKSSQEN. ATP is bound at residue 32 to 42; sequence LSGGLDSTTCL. Zn(2+) contacts are provided by Cys212, Cys221, Cys224, and Cys227.

This sequence belongs to the QueC family. It depends on Zn(2+) as a cofactor.

It catalyses the reaction 7-carboxy-7-deazaguanine + NH4(+) + ATP = 7-cyano-7-deazaguanine + ADP + phosphate + H2O + H(+). Its pathway is purine metabolism; 7-cyano-7-deazaguanine biosynthesis. In terms of biological role, catalyzes the ATP-dependent conversion of 7-carboxy-7-deazaguanine (CDG) to 7-cyano-7-deazaguanine (preQ(0)). The sequence is that of 7-cyano-7-deazaguanine synthase from Leptospira borgpetersenii serovar Hardjo-bovis (strain JB197).